The primary structure comprises 322 residues: Lipoyl synthase (322 aa).

7 residues coordinate [4Fe-4S] cluster: Cys66, Cys71, Cys77, Cys92, Cys96, Cys99, and Ser306. Residues 78–295 (FSKGTATFMI…EKEAYELGFS (218 aa)) enclose the Radical SAM core domain.

Belongs to the radical SAM superfamily. Lipoyl synthase family. Requires [4Fe-4S] cluster as cofactor.

It localises to the cytoplasm. The catalysed reaction is [[Fe-S] cluster scaffold protein carrying a second [4Fe-4S](2+) cluster] + N(6)-octanoyl-L-lysyl-[protein] + 2 oxidized [2Fe-2S]-[ferredoxin] + 2 S-adenosyl-L-methionine + 4 H(+) = [[Fe-S] cluster scaffold protein] + N(6)-[(R)-dihydrolipoyl]-L-lysyl-[protein] + 4 Fe(3+) + 2 hydrogen sulfide + 2 5'-deoxyadenosine + 2 L-methionine + 2 reduced [2Fe-2S]-[ferredoxin]. It functions in the pathway protein modification; protein lipoylation via endogenous pathway; protein N(6)-(lipoyl)lysine from octanoyl-[acyl-carrier-protein]: step 2/2. Functionally, catalyzes the radical-mediated insertion of two sulfur atoms into the C-6 and C-8 positions of the octanoyl moiety bound to the lipoyl domains of lipoate-dependent enzymes, thereby converting the octanoylated domains into lipoylated derivatives. In Neisseria meningitidis serogroup C (strain 053442), this protein is Lipoyl synthase.